Reading from the N-terminus, the 486-residue chain is ATP synthase subunit beta (486 aa).

ATP is bound at residue 170–177 (GGAGVGKT).

It belongs to the ATPase alpha/beta chains family. F-type ATPases have 2 components, CF(1) - the catalytic core - and CF(0) - the membrane proton channel. CF(1) has five subunits: alpha(3), beta(3), gamma(1), delta(1), epsilon(1). CF(0) has three main subunits: a(1), b(2) and c(9-12). The alpha and beta chains form an alternating ring which encloses part of the gamma chain. CF(1) is attached to CF(0) by a central stalk formed by the gamma and epsilon chains, while a peripheral stalk is formed by the delta and b chains.

It localises to the cell membrane. It catalyses the reaction ATP + H2O + 4 H(+)(in) = ADP + phosphate + 5 H(+)(out). In terms of biological role, produces ATP from ADP in the presence of a proton gradient across the membrane. The catalytic sites are hosted primarily by the beta subunits. The protein is ATP synthase subunit beta of Clavibacter sepedonicus (Clavibacter michiganensis subsp. sepedonicus).